We begin with the raw amino-acid sequence, 923 residues long: MDYSSTINLPKTAFPMKAGLKEKEPKIIKKWEEEKLYQQLRELRKGAPKCILHDGPPYANGDIHIGTSLNKIIKDIIVRYKSAKGFDSPYVPGWDCHGMPIELKVQESLGDKYKETSKFIMRKKCRAYAQKYIDIQRKEFKRLGVMGDWENPYLTMSPEYESEIVEVFAQLVEKGYIYKGLRTIHWCMDCETALAAAEIEYDDNHTSTSVYVRFPVLNKINDKLDGNVDVMIWTTTPWTLPSNMACAFNRDLEYVAVEIDGRYAIMTTSLVDTVLSKKDMKAEGRDMIPVSMEDIEKLEIAHPFIKDRKSAVVFADYVEATAGTGIVHTAPGHGMEDYQTGMNYGLEIYCPVDKAGRYTSDFPEMQGMKVRDANPKVVEILENNGSLYHKEKVTHSYPICWRCKNPLIFRATSQWFMNMTHDDIDKRTVKALDNIKWYPTWGHDRMQKMLENRPDWCLSRQRSWGVPIPAFYCKNCGKTLLTAESTRHFAEIVKTKGMDVWFELEAKDLLPEGTKCECGSTDFDKEQDILDVWFDSGVSSFAAQKTNKDLDGVFPVDIYLEGGDQYRGWFQAAIWPSMAIRGIPPYKELVTHGWTLDEQGRAMHKSAGNVVSPLEVIDKYGADILRLWCISEDFTHNARVGDNMMKAIADNYRKIRNTFRYLLGNISDFDFTKEKIEVKDLLPVDRYALSRLHSFIKVAEKACDGYEFHLFYQRLINYCVVELSATYFDIIKDRLYCDRKDSVSRRSAQTVLVEILDVLVKLIAPVLPFTTDEVWGYYKGENASSVHLELYPKADDNLIDLELEKEWTSILKVRDDVLLSLERARDNSTIGKSLEAYVTICTKEPATKELLTKYEKYLNEIFIVSKVTLSDSKDDTFIEGGVSFVKTEKASHEKCVRCWGHYDSVGTDSEHKELCTRCAEAVR.

A 'HIGH' region motif is present at residues 57–67 (PYANGDIHIGT). E561 contributes to the L-isoleucyl-5'-AMP binding site. A 'KMSKS' region motif is present at residues 602–606 (AMHKS). Residue K605 participates in ATP binding. Zn(2+) is bound by residues C895, C898, C915, and C918.

Belongs to the class-I aminoacyl-tRNA synthetase family. IleS type 1 subfamily. As to quaternary structure, monomer. Zn(2+) serves as cofactor.

It is found in the cytoplasm. The catalysed reaction is tRNA(Ile) + L-isoleucine + ATP = L-isoleucyl-tRNA(Ile) + AMP + diphosphate. Catalyzes the attachment of isoleucine to tRNA(Ile). As IleRS can inadvertently accommodate and process structurally similar amino acids such as valine, to avoid such errors it has two additional distinct tRNA(Ile)-dependent editing activities. One activity is designated as 'pretransfer' editing and involves the hydrolysis of activated Val-AMP. The other activity is designated 'posttransfer' editing and involves deacylation of mischarged Val-tRNA(Ile). This chain is Isoleucine--tRNA ligase, found in Brachyspira hyodysenteriae (strain ATCC 49526 / WA1).